We begin with the raw amino-acid sequence, 1771 residues long: Fatty acid synthase alpha subunit pkiB (1771 aa).

Polar residues predominate over residues 108–130 (SQPTQPQFEPTSPSHLTKRSPSP). Residues 108–133 (SQPTQPQFEPTSPSHLTKRSPSPSKA) are disordered. Residues 143–221 (ELTLQAGHVI…ESFQPEFSGI (79 aa)) form the Carrier domain. The residue at position 181 (serine 181) is an O-(pantetheine 4'-phosphoryl)serine. The interval 575–771 (HKAVLVTGAG…CGAVIGWTRG (197 aa)) is beta-ketoacyl reductase. One can recognise a Ketosynthase family 3 (KS3) domain in the interval 1011–1531 (KELLHEVAVE…QKGAINIMVS (521 aa)). Active-site for beta-ketoacyl synthase activity residues include cysteine 1197, histidine 1416, and histidine 1457. Mg(2+)-binding residues include aspartate 1650, valine 1651, and glutamate 1652. Residues 1650-1652 (DVE), tyrosine 1676, serine 1686, 1695-1705 (EAAFKSLQTTS), 1719-1722 (EVGG), and 1753-1755 (ISH) each bind acetyl-CoA. Residues serine 1754 and histidine 1755 each coordinate Mg(2+).

The protein belongs to the thiolase-like superfamily. Fungal fatty acid synthetase subunit alpha family. [Alpha(6)beta(6)] hexamers of two multifunctional subunits (alpha and beta).

The catalysed reaction is acetyl-CoA + n malonyl-CoA + 2n NADPH + 4n H(+) = a long-chain-acyl-CoA + n CoA + n CO2 + 2n NADP(+).. It carries out the reaction a fatty acyl-[ACP] + malonyl-[ACP] + H(+) = a 3-oxoacyl-[ACP] + holo-[ACP] + CO2. It catalyses the reaction a (3R)-hydroxyacyl-[ACP] + NADP(+) = a 3-oxoacyl-[ACP] + NADPH + H(+). It participates in secondary metabolite biosynthesis. Fatty acid synthase alpha subunit; part of the pki gene cluster that mediates the biosynthesis of 2,4-dihydroxy-3-methyl-6-(2-oxoundecyl)benzaldehyde. The first step in the pathway is the generation of the decanoyl starter unit by the FAS composed of subunits pkiB and pkiC, which is then transferred directly from the FAS to the SAT domain of the non-reducing polyketide synthase pkiA. PkiA condenses the decanoyyl starter unit with 4 malonyl-CoA units and performs one methylation step to yield 2,4-dihydroxy-3-methyl-6-(2-oxoundecyl)benzaldehyde. The polypeptide is Fatty acid synthase alpha subunit pkiB (Emericella nidulans (strain FGSC A4 / ATCC 38163 / CBS 112.46 / NRRL 194 / M139) (Aspergillus nidulans)).